The following is a 171-amino-acid chain: S-ribosylhomocysteine lyase (171 aa).

Fe cation contacts are provided by H54, H58, and C128.

The protein belongs to the LuxS family. As to quaternary structure, homodimer. The cofactor is Fe cation.

The enzyme catalyses S-(5-deoxy-D-ribos-5-yl)-L-homocysteine = (S)-4,5-dihydroxypentane-2,3-dione + L-homocysteine. Involved in the synthesis of autoinducer 2 (AI-2) which is secreted by bacteria and is used to communicate both the cell density and the metabolic potential of the environment. The regulation of gene expression in response to changes in cell density is called quorum sensing. Catalyzes the transformation of S-ribosylhomocysteine (RHC) to homocysteine (HC) and 4,5-dihydroxy-2,3-pentadione (DPD). The chain is S-ribosylhomocysteine lyase from Proteus mirabilis (strain HI4320).